Consider the following 350-residue polypeptide: Biotin synthase (350 aa).

A Radical SAM core domain is found at 63–281 (GDIELATLLS…IAVARITMPK (219 aa)). [4Fe-4S] cluster is bound by residues cysteine 78, cysteine 82, and cysteine 85. Residues cysteine 122, cysteine 153, cysteine 213, and arginine 285 each coordinate [2Fe-2S] cluster.

Belongs to the radical SAM superfamily. Biotin synthase family. In terms of assembly, homodimer. Requires [4Fe-4S] cluster as cofactor. It depends on [2Fe-2S] cluster as a cofactor.

The enzyme catalyses (4R,5S)-dethiobiotin + (sulfur carrier)-SH + 2 reduced [2Fe-2S]-[ferredoxin] + 2 S-adenosyl-L-methionine = (sulfur carrier)-H + biotin + 2 5'-deoxyadenosine + 2 L-methionine + 2 oxidized [2Fe-2S]-[ferredoxin]. It functions in the pathway cofactor biosynthesis; biotin biosynthesis; biotin from 7,8-diaminononanoate: step 2/2. Catalyzes the conversion of dethiobiotin (DTB) to biotin by the insertion of a sulfur atom into dethiobiotin via a radical-based mechanism. The sequence is that of Biotin synthase from Acidovorax ebreus (strain TPSY) (Diaphorobacter sp. (strain TPSY)).